The following is a 185-amino-acid chain: ARGSTCAVFGLGGVGLSVIMGCKAAGASRIIAVDINSDKFAKAKELGATDCINPKDHKEPIHKVLIGMTGYGVDYSFEVIGRIETMVAALASCHYNYGVSVIVGVPPAAQNITFDPMLLFSGRTWKGSVFGGWKSKDSVPKLVADYMKKKFVLDPLITHTLPFSKINEGFDLLRAGKSIRSVLTF.

NAD(+)-binding positions include 10–15 (GLGGVG), Asp34, Lys39, 103–105 (VGV), and Arg180.

This sequence belongs to the zinc-containing alcohol dehydrogenase family. Class-I subfamily. Homodimer. Zn(2+) is required as a cofactor.

The protein resides in the cytoplasm. The catalysed reaction is a primary alcohol + NAD(+) = an aldehyde + NADH + H(+). The enzyme catalyses a secondary alcohol + NAD(+) = a ketone + NADH + H(+). This Anas platyrhynchos (Mallard) protein is Alcohol dehydrogenase 1 (ADH1).